The following is a 102-amino-acid chain: uncharacterized protein (102 aa).

The N-terminal stretch at 1–19 (MFLFCFVLFCSLVFPLARG) is a signal peptide.

This is an uncharacterized protein from Saccharomyces cerevisiae (strain ATCC 204508 / S288c) (Baker's yeast).